The sequence spans 93 residues: UPF0728 protein C10orf53 homolog (93 aa).

The protein belongs to the UPF0728 family.

This chain is UPF0728 protein C10orf53 homolog, found in Bos taurus (Bovine).